We begin with the raw amino-acid sequence, 457 residues long: Argininosuccinate lyase (457 aa).

This sequence belongs to the lyase 1 family. Argininosuccinate lyase subfamily.

The protein resides in the cytoplasm. The catalysed reaction is 2-(N(omega)-L-arginino)succinate = fumarate + L-arginine. Its pathway is amino-acid biosynthesis; L-arginine biosynthesis; L-arginine from L-ornithine and carbamoyl phosphate: step 3/3. The protein is Argininosuccinate lyase of Pasteurella multocida (strain Pm70).